Here is a 679-residue protein sequence, read N- to C-terminus: tRNA uridine 5-carboxymethylaminomethyl modification enzyme MnmG (679 aa).

15-20 (GAGHAG) is an FAD binding site. 314–328 (GPRYCPSIEDKIVRF) is an NAD(+) binding site.

This sequence belongs to the MnmG family. Homodimer. Heterotetramer of two MnmE and two MnmG subunits. It depends on FAD as a cofactor.

It localises to the cytoplasm. NAD-binding protein involved in the addition of a carboxymethylaminomethyl (cmnm) group at the wobble position (U34) of certain tRNAs, forming tRNA-cmnm(5)s(2)U34. The polypeptide is tRNA uridine 5-carboxymethylaminomethyl modification enzyme MnmG (Roseiflexus sp. (strain RS-1)).